A 338-amino-acid polypeptide reads, in one-letter code: 1-aminocyclopropane-1-carboxylate deaminase (338 aa).

Residue K51 is modified to N6-(pyridoxal phosphate)lysine. The active-site Nucleophile is S78.

The protein belongs to the ACC deaminase/D-cysteine desulfhydrase family. Homotrimer. Requires pyridoxal 5'-phosphate as cofactor.

It carries out the reaction 1-aminocyclopropane-1-carboxylate + H2O = 2-oxobutanoate + NH4(+). Functionally, catalyzes a cyclopropane ring-opening reaction, the irreversible conversion of 1-aminocyclopropane-1-carboxylate (ACC) to ammonia and alpha-ketobutyrate. Allows growth on ACC as a nitrogen source. The protein is 1-aminocyclopropane-1-carboxylate deaminase of Acidovorax ebreus (strain TPSY) (Diaphorobacter sp. (strain TPSY)).